We begin with the raw amino-acid sequence, 443 residues long: Xaa-Pro dipeptidase (443 aa).

The Mn(2+) site is built by aspartate 246, aspartate 257, histidine 339, glutamate 384, and glutamate 423.

This sequence belongs to the peptidase M24B family. Bacterial-type prolidase subfamily. Mn(2+) is required as a cofactor.

It catalyses the reaction Xaa-L-Pro dipeptide + H2O = an L-alpha-amino acid + L-proline. Splits dipeptides with a prolyl residue in the C-terminal position. The sequence is that of Xaa-Pro dipeptidase from Yersinia pestis bv. Antiqua (strain Nepal516).